Reading from the N-terminus, the 372-residue chain is GDP-mannose 4,6-dehydratase (372 aa).

NADP(+) is bound by residues 8–13, 63–64, 85–89, and Y100; these read GITGQD, DL, and LGAQS. Residue T132 is part of the active site. Active-site nucleophile residues include E134 and Y156. Residues K160, H186, and R191 each contribute to the NADP(+) site.

The protein belongs to the NAD(P)-dependent epimerase/dehydratase family. GDP-mannose 4,6-dehydratase subfamily. The cofactor is NADP(+).

The catalysed reaction is GDP-alpha-D-mannose = GDP-4-dehydro-alpha-D-rhamnose + H2O. The protein operates within bacterial outer membrane biogenesis; LPS O-antigen biosynthesis. Its pathway is nucleotide-sugar biosynthesis; GDP-L-fucose biosynthesis via de novo pathway; GDP-L-fucose from GDP-alpha-D-mannose: step 1/2. Catalyzes the conversion of GDP-D-mannose to GDP-4-dehydro-6-deoxy-D-mannose. This Yersinia enterocolitica serotype O:8 / biotype 1B (strain NCTC 13174 / 8081) protein is GDP-mannose 4,6-dehydratase.